The primary structure comprises 201 residues: Small ribosomal subunit protein uS4c (201 aa).

Residues 15–43 (LGALPGLTNKRPRAGSDLRNQSRSGKKSQ) form a disordered region. In terms of domain architecture, S4 RNA-binding spans 89–152 (MRLDNILFRL…NSRTLIQNSL (64 aa)).

Belongs to the universal ribosomal protein uS4 family. In terms of assembly, part of the 30S ribosomal subunit. Contacts protein S5. The interaction surface between S4 and S5 is involved in control of translational fidelity.

It is found in the plastid. Its subcellular location is the chloroplast. In terms of biological role, one of the primary rRNA binding proteins, it binds directly to 16S rRNA where it nucleates assembly of the body of the 30S subunit. Its function is as follows. With S5 and S12 plays an important role in translational accuracy. In Panax ginseng (Korean ginseng), this protein is Small ribosomal subunit protein uS4c (rps4).